The chain runs to 618 residues: Glutamine--fructose-6-phosphate aminotransferase [isomerizing] (618 aa).

C2 acts as the Nucleophile; for GATase activity in catalysis. In terms of domain architecture, Glutamine amidotransferase type-2 spans 2–226 (CGIVGYAGRN…DFETAVLTPD (225 aa)). Positions 72-91 (WATHGRPSTENAHPHNSGGN) are disordered. SIS domains follow at residues 295 to 434 (NDDE…VRGK) and 467 to 608 (CAEN…IDKP). K613 acts as the For Fru-6P isomerization activity in catalysis.

Homodimer.

It localises to the cytoplasm. The catalysed reaction is D-fructose 6-phosphate + L-glutamine = D-glucosamine 6-phosphate + L-glutamate. Its function is as follows. Catalyzes the first step in hexosamine metabolism, converting fructose-6P into glucosamine-6P using glutamine as a nitrogen source. The chain is Glutamine--fructose-6-phosphate aminotransferase [isomerizing] from Methanosarcina mazei (strain ATCC BAA-159 / DSM 3647 / Goe1 / Go1 / JCM 11833 / OCM 88) (Methanosarcina frisia).